A 278-amino-acid polypeptide reads, in one-letter code: NAD-capped RNA hydrolase NudC (278 aa).

Arg-84 is a substrate binding site. The Zn(2+) site is built by Cys-114 and Cys-117. Glu-127 serves as a coordination point for substrate. Position 132 (Cys-132) interacts with Zn(2+). Tyr-140 contributes to the substrate binding site. The 124-residue stretch at 141–264 (PRISPSMIVL…SIARYLIEAY (124 aa)) folds into the Nudix hydrolase domain. A divalent metal cation contacts are provided by Ala-174, Glu-190, and Glu-194. A Nudix box motif is present at residues 175–196 (GFVEPGESAEDCVHREVMEEVQ). 208 to 215 (QCWPFPHS) provides a ligand contact to substrate. Glu-235 provides a ligand contact to a divalent metal cation. Ala-257 serves as a coordination point for substrate.

This sequence belongs to the Nudix hydrolase family. NudC subfamily. Homodimer. The cofactor is Mg(2+). It depends on Mn(2+) as a cofactor. Zn(2+) serves as cofactor.

It carries out the reaction a 5'-end NAD(+)-phospho-ribonucleoside in mRNA + H2O = a 5'-end phospho-adenosine-phospho-ribonucleoside in mRNA + beta-nicotinamide D-ribonucleotide + 2 H(+). The catalysed reaction is NAD(+) + H2O = beta-nicotinamide D-ribonucleotide + AMP + 2 H(+). The enzyme catalyses NADH + H2O = reduced beta-nicotinamide D-ribonucleotide + AMP + 2 H(+). In terms of biological role, mRNA decapping enzyme that specifically removes the nicotinamide adenine dinucleotide (NAD) cap from a subset of mRNAs by hydrolyzing the diphosphate linkage to produce nicotinamide mononucleotide (NMN) and 5' monophosphate mRNA. The NAD-cap is present at the 5'-end of some mRNAs and stabilizes RNA against 5'-processing. Has preference for mRNAs with a 5'-end purine. Catalyzes the hydrolysis of a broad range of dinucleotide pyrophosphates. This is NAD-capped RNA hydrolase NudC from Pseudomonas syringae pv. tomato (strain ATCC BAA-871 / DC3000).